The following is a 154-amino-acid chain: tRNA-splicing endonuclease (154 aa).

Residues Y86, H102, and K133 contribute to the active site.

This sequence belongs to the tRNA-intron endonuclease family. Archaeal short subfamily. Homotetramer; although the tetramer contains four active sites, only two participate in the cleavage. Therefore, it should be considered as a dimer of dimers.

It catalyses the reaction pretRNA = a 3'-half-tRNA molecule with a 5'-OH end + a 5'-half-tRNA molecule with a 2',3'-cyclic phosphate end + an intron with a 2',3'-cyclic phosphate and a 5'-hydroxyl terminus.. Functionally, endonuclease that removes tRNA introns. Cleaves pre-tRNA at the 5'- and 3'-splice sites to release the intron. The products are an intron and two tRNA half-molecules bearing 2',3' cyclic phosphate and 5'-OH termini. Recognizes a pseudosymmetric substrate in which 2 bulged loops of 3 bases are separated by a stem of 4 bp. In Nanoarchaeum equitans (strain Kin4-M), this protein is tRNA-splicing endonuclease.